The primary structure comprises 555 residues: MDKRHDPSRRIIAPHGTQLSCKSWLTEAPMRMLMNNLHPDVAERPEDLVVYGGIGRAARDWDCYDKIIEVLQRLEDDETLLVQSGKPVGVFRTHADAPRVLIANSNLVPHWANWEHFNELDKLGLAMYGQMTAGSWIYIGTQGIVQGTYETFVSVAKQHFEGISKGKWILTGGLGGMGGAQTLAGTMAGFSVLACEVDETRIDFRLRTRYVDKKATSLDEALAMIEAANQAGKPVSVGLLANAADVFAELVKRGVTPDVVTDQTSAHDPLNGYLPQGWTMAEAAAMRKTDEAAVIKAAKASMAVQVQAMLDLQTAGAATLDYGNNIRQMAFEMGVENAFDFPGFVPAYIRPLFCEGIGPFRWVALSGDPEDIYKTDAKVKELIPDNPLLHNWLDMARERIAFQGLPARICWVGLKDRARLALAFNEMVKNGELSAPVVIGRDHLDSGSVASPNRETESMLDGSDAVSDWPLLNALLNTASGATWVSLHHGGGVGMGFSQHSGVVIVCDGTDAAAKRVGRVLWNDPATGVMRHADAGYEIAKNCAKEQGLDLPMQD.

Residues 52–53 (GG), Gln-130, 176–178 (GMG), Glu-196, Arg-201, 242–243 (NA), 263–267 (QTSAH), 273–274 (YL), and Tyr-322 contribute to the NAD(+) site. Residue Cys-410 is part of the active site. Gly-492 is a binding site for NAD(+).

The protein belongs to the urocanase family. The cofactor is NAD(+).

The protein resides in the cytoplasm. It carries out the reaction 4-imidazolone-5-propanoate = trans-urocanate + H2O. The protein operates within amino-acid degradation; L-histidine degradation into L-glutamate; N-formimidoyl-L-glutamate from L-histidine: step 2/3. In terms of biological role, catalyzes the conversion of urocanate to 4-imidazolone-5-propionate. This is Urocanate hydratase from Shewanella putrefaciens (strain CN-32 / ATCC BAA-453).